Here is a 152-residue protein sequence, read N- to C-terminus: NADH-quinone oxidoreductase subunit I 1 (152 aa).

2 4Fe-4S ferredoxin-type domains span residues M53 to D83 and V94 to G123. [4Fe-4S] cluster-binding residues include C63, C66, C69, C73, C103, C106, C109, and C113.

Belongs to the complex I 23 kDa subunit family. In terms of assembly, NDH-1 is composed of 14 different subunits. Subunits NuoA, H, J, K, L, M, N constitute the membrane sector of the complex. Requires [4Fe-4S] cluster as cofactor.

It localises to the cell inner membrane. It catalyses the reaction a quinone + NADH + 5 H(+)(in) = a quinol + NAD(+) + 4 H(+)(out). Its function is as follows. NDH-1 shuttles electrons from NADH, via FMN and iron-sulfur (Fe-S) centers, to quinones in the respiratory chain. The immediate electron acceptor for the enzyme in this species is believed to be ubiquinone. Couples the redox reaction to proton translocation (for every two electrons transferred, four hydrogen ions are translocated across the cytoplasmic membrane), and thus conserves the redox energy in a proton gradient. The sequence is that of NADH-quinone oxidoreductase subunit I 1 from Koribacter versatilis (strain Ellin345).